The following is a 555-amino-acid chain: Urocanate hydratase (555 aa).

NAD(+) contacts are provided by residues 51–52 (GG), Q129, 175–177 (GMG), E195, 262–266 (QTSAH), 272–273 (YL), and Y321. Residue C409 is part of the active site. Position 491 (G491) interacts with NAD(+).

The protein belongs to the urocanase family. The cofactor is NAD(+).

Its subcellular location is the cytoplasm. The catalysed reaction is 4-imidazolone-5-propanoate = trans-urocanate + H2O. It functions in the pathway amino-acid degradation; L-histidine degradation into L-glutamate; N-formimidoyl-L-glutamate from L-histidine: step 2/3. Functionally, catalyzes the conversion of urocanate to 4-imidazolone-5-propionate. This chain is Urocanate hydratase, found in Xanthomonas euvesicatoria pv. vesicatoria (strain 85-10) (Xanthomonas campestris pv. vesicatoria).